The primary structure comprises 404 residues: Deoxyguanosinetriphosphate triphosphohydrolase-like protein (404 aa).

Residues 1 to 32 (MAVGMAAPHATYASDPARSRGRLFDEPPSKTR) are disordered. The segment covering 22-32 (RLFDEPPSKTR) has biased composition (basic and acidic residues). One can recognise an HD domain in the interval 69 to 217 (RLTHTLEVAQ…AAIADDIAYD (149 aa)).

The protein belongs to the dGTPase family. Type 2 subfamily.

This is Deoxyguanosinetriphosphate triphosphohydrolase-like protein from Nitrobacter hamburgensis (strain DSM 10229 / NCIMB 13809 / X14).